The chain runs to 103 residues: Small ribosomal subunit protein uS10 (103 aa).

Belongs to the universal ribosomal protein uS10 family. As to quaternary structure, part of the 30S ribosomal subunit.

Involved in the binding of tRNA to the ribosomes. The polypeptide is Small ribosomal subunit protein uS10 (Neisseria gonorrhoeae).